The sequence spans 160 residues: Protein-export protein SecB (160 aa).

This sequence belongs to the SecB family. Homotetramer, a dimer of dimers. One homotetramer interacts with 1 SecA dimer.

Its subcellular location is the cytoplasm. One of the proteins required for the normal export of preproteins out of the cell cytoplasm. It is a molecular chaperone that binds to a subset of precursor proteins, maintaining them in a translocation-competent state. It also specifically binds to its receptor SecA. The protein is Protein-export protein SecB of Rhodospirillum rubrum (strain ATCC 11170 / ATH 1.1.1 / DSM 467 / LMG 4362 / NCIMB 8255 / S1).